Reading from the N-terminus, the 261-residue chain is High-affinity zinc uptake system membrane protein ZnuB (261 aa).

At 1-7 (MIELLFP) the chain is on the periplasmic side. Residues 8-28 (GWLAGIMLACAAGPLGSFVVW) form a helical membrane-spanning segment. Topologically, residues 29 to 53 (RRMSYFGDTLAHASLLGVAFGLLLD) are cytoplasmic. A helical membrane pass occupies residues 54-74 (VNPFYAVIAVTLLLAGGLVWL). Residues 75–83 (EKRPQLAID) lie on the Periplasmic side of the membrane. A helical membrane pass occupies residues 84-104 (TLLGIMAHSALSLGLVVVSLM). Over 105–121 (SNIRVDLMAYLFGDLLA) the chain is Cytoplasmic. The helical transmembrane segment at 122–142 (VTPEDLISIAIGVVIVVAILF) threads the bilayer. The Periplasmic portion of the chain corresponds to 143–177 (WQWRNLLSMTISPDLAFVDGVKLQRVKLLLMLVTA). The helical transmembrane segment at 178–198 (LTIGVAMKFVGALIITSLLII) threads the bilayer. At 199-213 (PAATARRFARTPEQM) the chain is on the cytoplasmic side. Residues 214-234 (AGVAVLVGMVAVTGGLTFSAV) form a helical membrane-spanning segment. Residue Tyr235 is a topological domain, periplasmic. The chain crosses the membrane as a helical span at residues 236–256 (DTPAGPSVVLCAALLFILSMM). The Cytoplasmic portion of the chain corresponds to 257–261 (KKQAS).

It belongs to the ABC-3 integral membrane protein family.

The protein localises to the cell inner membrane. Its function is as follows. Involved in the high-affinity zinc uptake transport system. In Escherichia coli (strain K12), this protein is High-affinity zinc uptake system membrane protein ZnuB (znuB).